A 520-amino-acid chain; its full sequence is MSRAAARFKIPMPETKADFAFPSLRAFSIVVALDMQHGIGDGESIPWRVPEDMTFFKNQTTLLRNKKPPTEKKRNAVVMGRKTWESVPVKFRPLKGRLNIVLSSKATVEELLAPLPEGQRAAAAQDVVVVNGGLAEALRLLARPLYCSSIETAYCVGGAQVYADAMLSPCIEKLQEVYLTRIYATAPACTRFFPFPPENAATAWDLASSQGRRKSEAEGLEFEICKYVPRNHEERQYLELIDRIMKTGIVKEDRTGVGTISLFGAQMRFSLRDNRLPLLTTKRVFWRGVCEELLWFLRGETSAQLLADKDIHIWDGNGSREFLDSRGLTENKEMDLGPVYGFQWRHFGADYKGFEANYDGEGVDQIKLIVETIKTNPNDRRLLVTAWNPCALQKMALPPCHLLAQFYVNTDTSELSCMLYQRSCDMGLGVPFNIASYALLTILIAKATGLRPGELVHTLGDAHVYRNHVDALKAQLERVPHAFPTLIFKEERQYLEDYELTDMEVIDYVPHPAIKMEMAV.

One can recognise a DHFR domain in the interval 26 to 229; it reads AFSIVVALDM…LEFEICKYVP (204 aa). Residue valine 30 participates in substrate binding. NADP(+)-binding positions include alanine 32 and 38-44; that span reads GIGDGES. Aspartate 52 provides a ligand contact to substrate. Residues 81–83, 102–105, and 157–164 contribute to the NADP(+) site; these read RKT, LSSK, and GGAQVYAD. Substrate is bound by residues tyrosine 162 and threonine 180. Residues 234–520 are thymidylate synthase; that stretch reads ERQYLELIDR…HPAIKMEMAV (287 aa). Position 254 (arginine 254) interacts with dUMP. Cysteine 400 is an active-site residue. DUMP-binding positions include histidine 401, 421–425, asparagine 433, and 463–465; these read QRSCD and HVY.

The protein in the N-terminal section; belongs to the dihydrofolate reductase family. In the C-terminal section; belongs to the thymidylate synthase family.

The catalysed reaction is (6S)-5,6,7,8-tetrahydrofolate + NADP(+) = 7,8-dihydrofolate + NADPH + H(+). It carries out the reaction dUMP + (6R)-5,10-methylene-5,6,7,8-tetrahydrofolate = 7,8-dihydrofolate + dTMP. Its pathway is cofactor biosynthesis; tetrahydrofolate biosynthesis; 5,6,7,8-tetrahydrofolate from 7,8-dihydrofolate: step 1/1. Functionally, bifunctional enzyme. Involved in de novo dTMP biosynthesis. Key enzyme in folate metabolism. Catalyzes an essential reaction for de novo glycine and purine synthesis, DNA precursor synthesis, and for the conversion of dUMP to dTMP. The protein is Bifunctional dihydrofolate reductase-thymidylate synthase of Leishmania major.